The sequence spans 702 residues: Flagellar operon control protein UmoB (702 aa).

A run of 5 helical transmembrane segments spans residues 4–24 (SVII…FLFF), 204–224 (GFWN…ALMM), 227–247 (VFLP…LFLI), 343–363 (IIFV…QPLS), and 656–676 (GNTL…FFII).

It belongs to the IgaA family.

It is found in the cell inner membrane. Its function is as follows. Up-regulator of flagellar flhDC master operon. This chain is Flagellar operon control protein UmoB (umoB), found in Proteus mirabilis.